Reading from the N-terminus, the 373-residue chain is GTP cyclohydrolase 1 type 2 homolog (373 aa).

Residues His-67, His-68, Asp-106, His-333, and Glu-336 each coordinate a divalent metal cation.

The protein belongs to the GTP cyclohydrolase I type 2/NIF3 family. As to quaternary structure, homohexamer.

This Listeria monocytogenes serovar 1/2a (strain ATCC BAA-679 / EGD-e) protein is GTP cyclohydrolase 1 type 2 homolog.